The following is a 313-amino-acid chain: RHOMBOID-like protein 7 (313 aa).

Residues 1-11 (MLSTAAEEDPE) are compositionally biased toward acidic residues. The segment at 1–24 (MLSTAAEEDPEGGSRETNNGGETT) is disordered. Residues 15–24 (RETNNGGETT) are compositionally biased toward polar residues. The next 7 membrane-spanning stretches (helical) occupy residues 31–51 (SWII…VMYY), 112–132 (WLHA…YIGV), 143–163 (VGTI…LFLE), 166–186 (ISVG…SELL), 196–216 (GVAI…GTLP), 221–241 (FAHI…LIHP), and 269–289 (LCIV…VILF). The Nucleophile role is filled by Ser171. His223 acts as the Charge relay system in catalysis.

Belongs to the peptidase S54 family.

The protein localises to the membrane. The catalysed reaction is Cleaves type-1 transmembrane domains using a catalytic dyad composed of serine and histidine that are contributed by different transmembrane domains.. In terms of biological role, probable rhomboid-type serine protease that catalyzes intramembrane proteolysis. May function in embryo development. The protein is RHOMBOID-like protein 7 of Arabidopsis thaliana (Mouse-ear cress).